The chain runs to 436 residues: UPF0229 protein mll9637 (436 aa).

Residues 54–103 (IPRKGTGEPTFGDDKESGRRQHILPGNRTFSSGDLIPKPGGGGGYGSAAG) are disordered.

The protein belongs to the UPF0229 family.

This chain is UPF0229 protein mll9637, found in Mesorhizobium japonicum (strain LMG 29417 / CECT 9101 / MAFF 303099) (Mesorhizobium loti (strain MAFF 303099)).